The following is a 363-amino-acid chain: Adenosine deaminase (363 aa).

Positions 42 and 44 each coordinate Zn(2+). A purine D-ribonucleoside-binding positions include 44–46, Asp-172, and Gly-201; that span reads HLD. Positions 170–184 are gating helix loop; regulates binding affinity for substrates and thus substrate selectivity; the sequence is IGDTGHEAANIKASA. Residue His-226 coordinates Zn(2+). Residues Glu-229, His-253, and Asp-310 each coordinate a purine D-ribonucleoside. Position 310 (Asp-310) interacts with Zn(2+).

It belongs to the metallo-dependent hydrolases superfamily. Adenosine and AMP deaminases family. The cofactor is Zn(2+).

It carries out the reaction adenosine + H2O + H(+) = inosine + NH4(+). The catalysed reaction is S-methyl-5'-thioadenosine + H2O + H(+) = S-methyl-5'-thioinosine + NH4(+). It functions in the pathway purine metabolism; purine nucleoside salvage. Its activity is regulated as follows. Inhibited by coformycin and methylthiocoformycin (MT-coformycin). Its function is as follows. Catalyzes the hydrolytic deamination of adenosine to produce inosine. Unlike mammalian adenosine deaminases, also catalyzes the deamination of 5'-methylthioadenosine (MTA), a by-product of polyamine biosynthesis, to produce 5'-methylthioinosine (MTI). Plays an essential role in the purine salvage pathway which allows the parasite to use host cell purines for the synthesis of nucleic acids. The polypeptide is Adenosine deaminase (Plasmodium vivax (strain Salvador I)).